A 201-amino-acid chain; its full sequence is Retinol-binding protein 4 (201 aa).

Positions 1–18 are cleaved as a signal peptide; that stretch reads MEWVWALVLLAALGGGSA. 3 disulfides stabilise this stretch: C22–C178, C88–C192, and C138–C147. Q116 is a substrate binding site. Position 139 is an omega-N-methylarginine (R139).

The protein belongs to the calycin superfamily. Lipocalin family. In terms of assembly, interacts with TTR. Interaction with TTR prevents its loss by filtration through the kidney glomeruli. Interacts with STRA6. In terms of tissue distribution, detected in blood plasma (at protein level).

It is found in the secreted. Functionally, retinol-binding protein that mediates retinol transport in blood plasma. Delivers retinol from the liver stores to the peripheral tissues. Transfers the bound all-trans retinol to STRA6, that then facilitates retinol transport across the cell membrane. This chain is Retinol-binding protein 4 (Rbp4), found in Rattus norvegicus (Rat).